Consider the following 111-residue polypeptide: Phosphoribosyl-ATP pyrophosphatase (111 aa).

It belongs to the PRA-PH family.

The protein resides in the cytoplasm. The catalysed reaction is 1-(5-phospho-beta-D-ribosyl)-ATP + H2O = 1-(5-phospho-beta-D-ribosyl)-5'-AMP + diphosphate + H(+). Its pathway is amino-acid biosynthesis; L-histidine biosynthesis; L-histidine from 5-phospho-alpha-D-ribose 1-diphosphate: step 2/9. This Pseudomonas entomophila (strain L48) protein is Phosphoribosyl-ATP pyrophosphatase.